The primary structure comprises 163 residues: 2-C-methyl-D-erythritol 2,4-cyclodiphosphate synthase (163 aa).

2 residues coordinate a divalent metal cation: Asp12 and His14. 4-CDP-2-C-methyl-D-erythritol 2-phosphate is bound by residues Asp12–His14 and His38–Ser39. His46 provides a ligand contact to a divalent metal cation. 4-CDP-2-C-methyl-D-erythritol 2-phosphate is bound by residues Asp60–Gly62, Thr136–Glu139, Phe143, and Arg146.

This sequence belongs to the IspF family. As to quaternary structure, homotrimer. A divalent metal cation serves as cofactor.

It catalyses the reaction 4-CDP-2-C-methyl-D-erythritol 2-phosphate = 2-C-methyl-D-erythritol 2,4-cyclic diphosphate + CMP. The protein operates within isoprenoid biosynthesis; isopentenyl diphosphate biosynthesis via DXP pathway; isopentenyl diphosphate from 1-deoxy-D-xylulose 5-phosphate: step 4/6. In terms of biological role, involved in the biosynthesis of isopentenyl diphosphate (IPP) and dimethylallyl diphosphate (DMAPP), two major building blocks of isoprenoid compounds. Catalyzes the conversion of 4-diphosphocytidyl-2-C-methyl-D-erythritol 2-phosphate (CDP-ME2P) to 2-C-methyl-D-erythritol 2,4-cyclodiphosphate (ME-CPP) with a corresponding release of cytidine 5-monophosphate (CMP). The chain is 2-C-methyl-D-erythritol 2,4-cyclodiphosphate synthase from Xanthomonas oryzae pv. oryzae (strain MAFF 311018).